Here is a 377-residue protein sequence, read N- to C-terminus: Chaperone protein DnaJ (377 aa).

The J domain occupies 5–70 (DYYQILGIPK…EKRSAYDQYG (66 aa)). The CR-type zinc finger occupies 132–210 (GIKKEIQIPT…CHGQGRVETY (79 aa)). The Zn(2+) site is built by C145, C148, C162, C165, C184, C187, C198, and C201. 4 CXXCXGXG motif repeats span residues 145–152 (CKTCYGSG), 162–169 (CSTCHGKG), 184–191 (CPTCHGKG), and 198–205 (CNLCHGQG).

This sequence belongs to the DnaJ family. As to quaternary structure, homodimer. Zn(2+) is required as a cofactor.

It is found in the cytoplasm. Its function is as follows. Participates actively in the response to hyperosmotic and heat shock by preventing the aggregation of stress-denatured proteins and by disaggregating proteins, also in an autonomous, DnaK-independent fashion. Unfolded proteins bind initially to DnaJ; upon interaction with the DnaJ-bound protein, DnaK hydrolyzes its bound ATP, resulting in the formation of a stable complex. GrpE releases ADP from DnaK; ATP binding to DnaK triggers the release of the substrate protein, thus completing the reaction cycle. Several rounds of ATP-dependent interactions between DnaJ, DnaK and GrpE are required for fully efficient folding. Also involved, together with DnaK and GrpE, in the DNA replication of plasmids through activation of initiation proteins. This chain is Chaperone protein DnaJ, found in Buchnera aphidicola subsp. Acyrthosiphon pisum (strain 5A).